A 278-amino-acid chain; its full sequence is Elongation factor Ts (278 aa).

The involved in Mg(2+) ion dislocation from EF-Tu stretch occupies residues 82 to 85 (TEPV).

The protein belongs to the EF-Ts family.

Its subcellular location is the cytoplasm. Its function is as follows. Associates with the EF-Tu.GDP complex and induces the exchange of GDP to GTP. It remains bound to the aminoacyl-tRNA.EF-Tu.GTP complex up to the GTP hydrolysis stage on the ribosome. In Cytophaga hutchinsonii (strain ATCC 33406 / DSM 1761 / CIP 103989 / NBRC 15051 / NCIMB 9469 / D465), this protein is Elongation factor Ts.